A 999-amino-acid polypeptide reads, in one-letter code: Ulvan lyase, long isoform (999 aa).

The first 21 residues, 1-21 (MKCLKTLLVSTTLLGAFSLNA), serve as a signal peptide directing secretion. 126 to 127 (SH) is a binding site for substrate. The active-site Proton donor/acceptor is the histidine 127. Residues aspartate 189, aspartate 199, and lysine 201 each contribute to the Ca(2+) site. The substrate site is built by tyrosine 280 and arginine 297. Ca(2+) contacts are provided by aspartate 300, aspartate 303, and tyrosine 305. Tyrosine 361 serves as a coordination point for substrate.

The protein belongs to the polysaccharide lyase 24 family.

In terms of biological role, ulvan lyase involved in ulvan degradation. Ulvan is the main polysaccharide component of the Ulvales (green seaweed) cell wall. It is composed of disaccharide building blocks comprising 3-sulfated rhamnose (Rha3S) linked to D-glucuronic acid (GlcA), L-iduronic acid (IduA), or D-xylose (Xyl). Ulvan lyase catalyzes preferentially the endolytic cleavage of the glycosidic bond between Rha3S and the uronic acid GlcA, but not IduA, producing oligosaccharides that have unsaturated 4-deoxy-L-threo-hex-4-enopyranosiduronic acid (deltaUA) at the non-reducing end. The most abundant end products in the degradation of the ulvan polysaccharide were deltaUA-Rha3S disaccharides and deltaUA-Rha3S-IduA-Rha3S and deltaUA-Rha3S-Xyl-Rha3S tetrasaccharides. The protein is Ulvan lyase, long isoform of Alteromonas sp.